The chain runs to 459 residues: Glutamyl-tRNA reductase (459 aa).

Residues 49-52 (TCNR), Ser-109, 114-116 (EQQ), and Gln-120 each bind substrate. The Nucleophile role is filled by Cys-50. Residue 189-194 (GAGAMG) coordinates NADP(+).

This sequence belongs to the glutamyl-tRNA reductase family. Homodimer.

The catalysed reaction is (S)-4-amino-5-oxopentanoate + tRNA(Glu) + NADP(+) = L-glutamyl-tRNA(Glu) + NADPH + H(+). The protein operates within porphyrin-containing compound metabolism; protoporphyrin-IX biosynthesis; 5-aminolevulinate from L-glutamyl-tRNA(Glu): step 1/2. Its function is as follows. Catalyzes the NADPH-dependent reduction of glutamyl-tRNA(Glu) to glutamate 1-semialdehyde (GSA). The sequence is that of Glutamyl-tRNA reductase from Mycolicibacterium paratuberculosis (strain ATCC BAA-968 / K-10) (Mycobacterium paratuberculosis).